We begin with the raw amino-acid sequence, 202 residues long: ATP-dependent Clp protease proteolytic subunit 1 (202 aa).

Catalysis depends on Ser-99, which acts as the Nucleophile. The active site involves His-123.

This sequence belongs to the peptidase S14 family. Fourteen ClpP subunits assemble into 2 heptameric rings which stack back to back to give a disk-like structure with a central cavity, resembling the structure of eukaryotic proteasomes.

The protein localises to the cytoplasm. It carries out the reaction Hydrolysis of proteins to small peptides in the presence of ATP and magnesium. alpha-casein is the usual test substrate. In the absence of ATP, only oligopeptides shorter than five residues are hydrolyzed (such as succinyl-Leu-Tyr-|-NHMec, and Leu-Tyr-Leu-|-Tyr-Trp, in which cleavage of the -Tyr-|-Leu- and -Tyr-|-Trp bonds also occurs).. Functionally, cleaves peptides in various proteins in a process that requires ATP hydrolysis. Has a chymotrypsin-like activity. Plays a major role in the degradation of misfolded proteins. The protein is ATP-dependent Clp protease proteolytic subunit 1 of Symbiobacterium thermophilum (strain DSM 24528 / JCM 14929 / IAM 14863 / T).